The chain runs to 144 residues: D-aminoacyl-tRNA deacylase (144 aa).

The short motif at 136–137 (GP) is the Gly-cisPro motif, important for rejection of L-amino acids element.

The protein belongs to the DTD family. As to quaternary structure, homodimer.

Its subcellular location is the cytoplasm. It carries out the reaction glycyl-tRNA(Ala) + H2O = tRNA(Ala) + glycine + H(+). The catalysed reaction is a D-aminoacyl-tRNA + H2O = a tRNA + a D-alpha-amino acid + H(+). Functionally, an aminoacyl-tRNA editing enzyme that deacylates mischarged D-aminoacyl-tRNAs. Also deacylates mischarged glycyl-tRNA(Ala), protecting cells against glycine mischarging by AlaRS. Acts via tRNA-based rather than protein-based catalysis; rejects L-amino acids rather than detecting D-amino acids in the active site. By recycling D-aminoacyl-tRNA to D-amino acids and free tRNA molecules, this enzyme counteracts the toxicity associated with the formation of D-aminoacyl-tRNA entities in vivo and helps enforce protein L-homochirality. The sequence is that of D-aminoacyl-tRNA deacylase from Haemophilus influenzae (strain ATCC 51907 / DSM 11121 / KW20 / Rd).